The sequence spans 156 residues: Transcriptional repressor NrdR (156 aa).

A zinc finger spans residues 3–34 (CPFCGNIDTQVKDSRPAEDHVSIRRRRFCPAC). The ATP-cone domain occupies 49–139 (LVVIKTSGKR…VYKNFQAADD (91 aa)).

This sequence belongs to the NrdR family. It depends on Zn(2+) as a cofactor.

Negatively regulates transcription of bacterial ribonucleotide reductase nrd genes and operons by binding to NrdR-boxes. The polypeptide is Transcriptional repressor NrdR (Ruegeria pomeroyi (strain ATCC 700808 / DSM 15171 / DSS-3) (Silicibacter pomeroyi)).